Reading from the N-terminus, the 314-residue chain is Dihydroorotate dehydrogenase (fumarate) (314 aa).

Residues lysine 46, 70–74 (NSMGL), and asparagine 130 each bind substrate. Position 46–47 (46–47 (KS)) interacts with FMN. Asparagine 130 contacts FMN. Residues serine 132 and cysteine 133 each act as nucleophile in the active site. 2 residues coordinate FMN: lysine 167 and isoleucine 195. Residue 196 to 197 (NS) participates in substrate binding. FMN contacts are provided by residues glycine 224, 252–253 (GG), and 274–275 (GT).

Belongs to the dihydroorotate dehydrogenase family. Type 1 subfamily. In terms of assembly, homodimer. FMN serves as cofactor.

It localises to the cytoplasm. It carries out the reaction (S)-dihydroorotate + fumarate = orotate + succinate. The protein operates within pyrimidine metabolism; UMP biosynthesis via de novo pathway. In terms of biological role, catalyzes the conversion of dihydroorotate to orotate with fumarate as the electron acceptor. The protein is Dihydroorotate dehydrogenase (fumarate) (URA1) of Saccharomyces bayanus (Yeast).